The primary structure comprises 367 residues: Polygalacturonase (367 aa).

The signal sequence occupies residues 1 to 18; sequence MRTSFVTMLALGAAAVSA. C34 and C49 are oxidised to a cystine. 5 PbH1 repeats span residues 161–191, 192–213, 214–234, 243–264, and 272–294; these read ADRLTLDHITIDNSEGDAKGGHNTDAFDVGS, STFITISNANIKNQDDCLAINS, GSNIKFVGGTCSGGHGISIGS, VKDVTISDSTVINSDNGVRVKT, and VSGVTFSNIKLSNIAKYGIVIEQ. D206 acts as the Proton donor in catalysis. Residues C208 and C224 are joined by a disulfide bond. Residue H228 is part of the active site. Residues N318 and N336 are each glycosylated (N-linked (GlcNAc...) asparagine). Cystine bridges form between C334-C339 and C358-C367.

The protein belongs to the glycosyl hydrolase 28 family.

It is found in the secreted. The enzyme catalyses (1,4-alpha-D-galacturonosyl)n+m + H2O = (1,4-alpha-D-galacturonosyl)n + (1,4-alpha-D-galacturonosyl)m.. This chain is Polygalacturonase (PG1), found in Penicillium digitatum (Green mold).